The following is a 118-amino-acid chain: uncharacterized protein (118 aa).

2 helical membrane-spanning segments follow: residues 7 to 27 (VIVK…FIIE) and 34 to 58 (VFVA…AIIF).

The protein resides in the membrane. This is an uncharacterized protein from Saccharomyces cerevisiae (strain ATCC 204508 / S288c) (Baker's yeast).